Consider the following 210-residue polypeptide: Urease accessory protein UreF (210 aa).

This sequence belongs to the UreF family. UreD, UreF and UreG form a complex that acts as a GTP-hydrolysis-dependent molecular chaperone, activating the urease apoprotein by helping to assemble the nickel containing metallocenter of UreC. The UreE protein probably delivers the nickel.

Its subcellular location is the cytoplasm. Functionally, required for maturation of urease via the functional incorporation of the urease nickel metallocenter. This Dinoroseobacter shibae (strain DSM 16493 / NCIMB 14021 / DFL 12) protein is Urease accessory protein UreF.